A 193-amino-acid chain; its full sequence is Dual-action ribosomal maturation protein DarP (193 aa).

Residues 1–10 are compositionally biased toward basic and acidic residues; sequence MRGRDEETGE. 2 disordered regions span residues 1–20 and 171–193; these read MRGRDEETGEFRGASRSQQR and QEQGLESGDSELEDGESASEDDE. Residues 178–193 show a composition bias toward acidic residues; that stretch reads GDSELEDGESASEDDE.

The protein belongs to the DarP family.

Its subcellular location is the cytoplasm. Member of a network of 50S ribosomal subunit biogenesis factors which assembles along the 30S-50S interface, preventing incorrect 23S rRNA structures from forming. Promotes peptidyl transferase center (PTC) maturation. The polypeptide is Dual-action ribosomal maturation protein DarP (Xanthomonas axonopodis pv. citri (strain 306)).